Reading from the N-terminus, the 488-residue chain is Glutamyl-tRNA(Gln) amidotransferase subunit A (488 aa).

Residues K80 and S155 each act as charge relay system in the active site. The active-site Acyl-ester intermediate is the S179.

Belongs to the amidase family. GatA subfamily. As to quaternary structure, heterotrimer of A, B and C subunits.

The enzyme catalyses L-glutamyl-tRNA(Gln) + L-glutamine + ATP + H2O = L-glutaminyl-tRNA(Gln) + L-glutamate + ADP + phosphate + H(+). Functionally, allows the formation of correctly charged Gln-tRNA(Gln) through the transamidation of misacylated Glu-tRNA(Gln) in organisms which lack glutaminyl-tRNA synthetase. The reaction takes place in the presence of glutamine and ATP through an activated gamma-phospho-Glu-tRNA(Gln). The polypeptide is Glutamyl-tRNA(Gln) amidotransferase subunit A (Chloroflexus aggregans (strain MD-66 / DSM 9485)).